We begin with the raw amino-acid sequence, 218 residues long: Large ribosomal subunit protein uL3 (218 aa).

Q154 carries the N5-methylglutamine modification.

This sequence belongs to the universal ribosomal protein uL3 family. In terms of assembly, part of the 50S ribosomal subunit. Forms a cluster with proteins L14 and L19. Post-translationally, methylated by PrmB.

Its function is as follows. One of the primary rRNA binding proteins, it binds directly near the 3'-end of the 23S rRNA, where it nucleates assembly of the 50S subunit. This is Large ribosomal subunit protein uL3 from Polynucleobacter asymbioticus (strain DSM 18221 / CIP 109841 / QLW-P1DMWA-1) (Polynucleobacter necessarius subsp. asymbioticus).